The following is a 216-amino-acid chain: Sugar transporter SWEET1 (216 aa).

7 helical membrane-spanning segments follow: residues 3–23 (WMWL…SSGL), 36–56 (ENIQ…WFYY), 65–85 (LMIV…AYLL), 96–116 (QVLV…LWIL), 125–145 (LGLF…ADLA), 157–177 (SFPL…YGLV), and 181–201 (LYIT…FWLF). The 85-residue stretch at 6 to 90 (LLSGACIVFT…GAYLLYSPER (85 aa)) folds into the MtN3/slv 1 domain. The 83-residue stretch at 124 to 206 (QLGLFCSVFT…RFWLFSQFPP (83 aa)) folds into the MtN3/slv 2 domain.

This sequence belongs to the SWEET sugar transporter family.

The protein localises to the golgi apparatus membrane. It localises to the cell membrane. Mediates sugar transport across membranes. The chain is Sugar transporter SWEET1 (slc50a1) from Xenopus laevis (African clawed frog).